A 1000-amino-acid polypeptide reads, in one-letter code: Chromosome transmission fidelity protein 18 homolog (1000 aa).

Disordered stretches follow at residues 53–89, 130–159, and 272–301; these read SAGD…RDAS, AGNS…DSKF, and EFGE…SHSL. Residues 60–70 are compositionally biased toward polar residues; sequence SNANSKPTGDS. Positions 272–295 are enriched in acidic residues; sequence EFGENDSEILENDDNAGEEDDEDE. 396–403 contacts ATP; sequence GPPGLGKT. The segment covering 888 to 898 has biased composition (polar residues); that stretch reads ARNAGRDNTTA. Positions 888 to 916 are disordered; the sequence is ARNAGRDNTTAAAAVKTADPKGAKSAAKP.

It belongs to the activator 1 small subunits family. CTF18 subfamily. As to quaternary structure, component of the CTF18-RFC complex, which consists of ctf18, ctf8, dcc1, rfc2, rfc3, rfc4 and rfc5. The CTF18-RFC complex associates with pcna.

Its subcellular location is the nucleus. In terms of biological role, chromosome cohesion factor involved in sister chromatid cohesion and fidelity of chromosome transmission. Component of one of the cell nuclear antigen loader complexes, CTF18-replication factor C (CTF18-RFC), which consists of ctf18, ctf8, dcc1, rfc2, rfc3, rfc4 and rfc5. The CTF18-RFC complex binds to single-stranded and primed DNAs and has weak ATPase activity that is stimulated by the presence of primed DNA, replication protein A (RPA) and by proliferating cell nuclear antigen (pcna). The CTF18-RFC complex catalyzes the ATP-dependent loading of pcna onto primed and gapped DNA. This Xenopus laevis (African clawed frog) protein is Chromosome transmission fidelity protein 18 homolog (chtf18).